A 135-amino-acid polypeptide reads, in one-letter code: Interleukin-4 (135 aa).

The N-terminal stretch at 1 to 24 (MGLTSQLIPVLVCLLACTSHFVHG) is a signal peptide. Cystine bridges form between cysteine 27–cysteine 135, cysteine 48–cysteine 85, and cysteine 70–cysteine 105. N-linked (GlcNAc...) asparagine glycans are attached at residues asparagine 62 and asparagine 96.

This sequence belongs to the IL-4/IL-13 family.

Its subcellular location is the secreted. Participates in at least several B-cell activation processes as well as of other cell types. It is a costimulator of DNA-synthesis. It induces the expression of class II MHC molecules on resting B-cells. It enhances both secretion and cell surface expression of IgE and IgG1. It also regulates the expression of the low affinity Fc receptor for IgE (CD23) on both lymphocytes and monocytes. Positively regulates IL31RA expression in macrophages. Stimulates autophagy in dendritic cells by interfering with mTORC1 signaling and through the induction of RUFY4. The protein is Interleukin-4 (IL4) of Cervus elaphus (Red deer).